Here is a 357-residue protein sequence, read N- to C-terminus: Histidinol-phosphate aminotransferase (357 aa).

At Lys-218 the chain carries N6-(pyridoxal phosphate)lysine.

The protein belongs to the class-II pyridoxal-phosphate-dependent aminotransferase family. Histidinol-phosphate aminotransferase subfamily. Homodimer. Requires pyridoxal 5'-phosphate as cofactor.

The enzyme catalyses L-histidinol phosphate + 2-oxoglutarate = 3-(imidazol-4-yl)-2-oxopropyl phosphate + L-glutamate. It functions in the pathway amino-acid biosynthesis; L-histidine biosynthesis; L-histidine from 5-phospho-alpha-D-ribose 1-diphosphate: step 7/9. The polypeptide is Histidinol-phosphate aminotransferase (Chlorobium luteolum (strain DSM 273 / BCRC 81028 / 2530) (Pelodictyon luteolum)).